The chain runs to 101 residues: Chaperone modulatory protein CbpM (101 aa).

This sequence belongs to the CbpM family.

Interacts with CbpA and inhibits both the DnaJ-like co-chaperone activity and the DNA binding activity of CbpA. Together with CbpA, modulates the activity of the DnaK chaperone system. Does not inhibit the co-chaperone activity of DnaJ. The polypeptide is Chaperone modulatory protein CbpM (Salmonella arizonae (strain ATCC BAA-731 / CDC346-86 / RSK2980)).